The following is a 439-amino-acid chain: Hemagglutinin-esterase (439 aa).

Residues 1 to 22 form the signal peptide; sequence MGCMCIAMAPRTLLLLIGCQLV. Residues 12 to 132 form an esterase domain 1 region; it reads TLLLLIGCQL…DNKRWMGNKA (121 aa). The Virion surface portion of the chain corresponds to 23–407; that stretch reads FGFNEPLNIV…PVCIYDPLPV (385 aa). The Nucleophile role is filled by Ser-45. Cys-49 and Cys-70 are joined by a disulfide. N-linked (GlcNAc...) asparagine; by host glycosylation is found at Asn-94, Asn-152, Asn-196, Asn-246, Asn-309, and Asn-316. Cys-118 and Cys-167 are oxidised to a cystine. The segment at 133 to 281 is receptor binding; the sequence is RFYARVYEKM…GNYKAVSLEY (149 aa). Disulfide bonds link Cys-202–Cys-291 and Cys-210–Cys-264. Positions 282-395 are esterase domain 2; it reads LLSLPSKAIC…HCPTAANIGY (114 aa). Cys-322 and Cys-327 are disulfide-bonded. Asn-331 is a glycosylation site (N-linked (GlcNAc...) asparagine; by host). Active-site charge relay system residues include Asp-342 and His-345. N-linked (GlcNAc...) asparagine; by host glycosylation is found at Asn-360 and Asn-374. Cys-363 and Cys-387 are oxidised to a cystine. The chain crosses the membrane as a helical span at residues 408–428; that stretch reads ILLGVLLGIAVLIIVFLMFYF. Residues 429–439 lie on the Intravirion side of the membrane; it reads MTDSGVRLHEA.

Belongs to the influenza type C/coronaviruses hemagglutinin-esterase family. In terms of assembly, homodimer; disulfide-linked. Forms a complex with the M protein in the pre-Golgi. Associates then with S-M complex to form a ternary complex S-M-HE. Post-translationally, N-glycosylated in the host RER.

It is found in the virion membrane. The protein resides in the host cell membrane. The catalysed reaction is N-acetyl-9-O-acetylneuraminate + H2O = N-acetylneuraminate + acetate + H(+). It carries out the reaction N-acetyl-4-O-acetylneuraminate + H2O = N-acetylneuraminate + acetate + H(+). Functionally, structural protein that makes short spikes at the surface of the virus. Contains receptor binding and receptor-destroying activities. Mediates de-O-acetylation of N-acetyl-4-O-acetylneuraminic acid, which is probably the receptor determinant recognized by the virus on the surface of erythrocytes and susceptible cells. This receptor-destroying activity is important for virus release as it probably helps preventing self-aggregation and ensures the efficient spread of the progeny virus from cell to cell. May serve as a secondary viral attachment protein for initiating infection, the spike protein being the major one. May become a target for both the humoral and the cellular branches of the immune system. The polypeptide is Hemagglutinin-esterase (Murine coronavirus (strain S) (MHV-S)).